A 391-amino-acid polypeptide reads, in one-letter code: 3-ketoacyl-CoA thiolase (391 aa).

The Acyl-thioester intermediate role is filled by Cys95. Active-site proton acceptor residues include His347 and Cys377.

The protein belongs to the thiolase-like superfamily. Thiolase family. Heterotetramer of two alpha chains (FadB) and two beta chains (FadA).

Its subcellular location is the cytoplasm. The enzyme catalyses an acyl-CoA + acetyl-CoA = a 3-oxoacyl-CoA + CoA. Its pathway is lipid metabolism; fatty acid beta-oxidation. Catalyzes the final step of fatty acid oxidation in which acetyl-CoA is released and the CoA ester of a fatty acid two carbons shorter is formed. The polypeptide is 3-ketoacyl-CoA thiolase (Pseudomonas aeruginosa (strain UCBPP-PA14)).